A 491-amino-acid chain; its full sequence is Chromosomal replication initiator protein DnaA (491 aa).

Residues 1–86 (MTDELNSQFT…VEALSRRLGE (86 aa)) form a domain I, interacts with DnaA modulators region. Residues 86-150 (ENVELGVRIA…GADKAETPDT (65 aa)) are domain II. The domain III, AAA+ region stretch occupies residues 151-367 (SLNARYTFES…GALIRVTAFA (217 aa)). 4 residues coordinate ATP: glycine 195, glycine 197, lysine 198, and threonine 199. Residues 368–491 (SLNKSPIELS…TARIRQRSRH (124 aa)) form a domain IV, binds dsDNA region.

Belongs to the DnaA family. As to quaternary structure, oligomerizes as a right-handed, spiral filament on DNA at oriC.

The protein resides in the cytoplasm. Plays an essential role in the initiation and regulation of chromosomal replication. ATP-DnaA binds to the origin of replication (oriC) to initiate formation of the DNA replication initiation complex once per cell cycle. Binds the DnaA box (a 9 base pair repeat at the origin) and separates the double-stranded (ds)DNA. Forms a right-handed helical filament on oriC DNA; dsDNA binds to the exterior of the filament while single-stranded (ss)DNA is stabiized in the filament's interior. The ATP-DnaA-oriC complex binds and stabilizes one strand of the AT-rich DNA unwinding element (DUE), permitting loading of DNA polymerase. After initiation quickly degrades to an ADP-DnaA complex that is not apt for DNA replication. Binds acidic phospholipids. In Mycobacteroides abscessus (strain ATCC 19977 / DSM 44196 / CCUG 20993 / CIP 104536 / JCM 13569 / NCTC 13031 / TMC 1543 / L948) (Mycobacterium abscessus), this protein is Chromosomal replication initiator protein DnaA.